Reading from the N-terminus, the 40-residue chain is Esterase-4 (40 aa).

Belongs to the type-B carboxylesterase/lipase family.

It catalyses the reaction a carboxylic ester + H2O = an alcohol + a carboxylate + H(+). This chain is Esterase-4 (Est-4), found in Drosophila mojavensis (Fruit fly).